Here is a 470-residue protein sequence, read N- to C-terminus: UDP-N-acetylmuramate--L-alanine ligase (470 aa).

An ATP-binding site is contributed by 114 to 120 (GTHGKTT).

This sequence belongs to the MurCDEF family.

It localises to the cytoplasm. It carries out the reaction UDP-N-acetyl-alpha-D-muramate + L-alanine + ATP = UDP-N-acetyl-alpha-D-muramoyl-L-alanine + ADP + phosphate + H(+). Its pathway is cell wall biogenesis; peptidoglycan biosynthesis. Cell wall formation. In Xanthobacter autotrophicus (strain ATCC BAA-1158 / Py2), this protein is UDP-N-acetylmuramate--L-alanine ligase.